The following is a 106-amino-acid chain: Putative toxin Rv3098A/RVBD_3098A (106 aa).

The protein belongs to the PemK/MazF family. As to quaternary structure, forms a complex with cognate antitoxin Rv3098B/RVBD_3098B.

In terms of biological role, putative toxic component of a possible type II toxin-antitoxin (TA) system. Its toxic effect may be neutralized by cognate antitoxin Rv3098B/RVBD_3098B. The chain is Putative toxin Rv3098A/RVBD_3098A from Mycobacterium tuberculosis (strain ATCC 25618 / H37Rv).